Reading from the N-terminus, the 121-residue chain is Small ribosomal subunit protein uS13 (121 aa).

Residues 92 to 121 (HKAGLPVRGQKTHSNARTRKGPRLTKIKKR) form a disordered region. The segment covering 101–121 (QKTHSNARTRKGPRLTKIKKR) has biased composition (basic residues).

The protein belongs to the universal ribosomal protein uS13 family. In terms of assembly, part of the 30S ribosomal subunit. Forms a loose heterodimer with protein S19. Forms two bridges to the 50S subunit in the 70S ribosome.

Located at the top of the head of the 30S subunit, it contacts several helices of the 16S rRNA. In the 70S ribosome it contacts the 23S rRNA (bridge B1a) and protein L5 of the 50S subunit (bridge B1b), connecting the 2 subunits; these bridges are implicated in subunit movement. Contacts the tRNAs in the A and P-sites. This chain is Small ribosomal subunit protein uS13, found in Petrotoga mobilis (strain DSM 10674 / SJ95).